The primary structure comprises 360 residues: Aminomethyltransferase (360 aa).

It belongs to the GcvT family. The glycine cleavage system is composed of four proteins: P, T, L and H.

The catalysed reaction is N(6)-[(R)-S(8)-aminomethyldihydrolipoyl]-L-lysyl-[protein] + (6S)-5,6,7,8-tetrahydrofolate = N(6)-[(R)-dihydrolipoyl]-L-lysyl-[protein] + (6R)-5,10-methylene-5,6,7,8-tetrahydrofolate + NH4(+). Functionally, the glycine cleavage system catalyzes the degradation of glycine. The polypeptide is Aminomethyltransferase (Pseudomonas syringae pv. tomato (strain ATCC BAA-871 / DC3000)).